A 614-amino-acid chain; its full sequence is Baeyer-Villiger monooxygenase peniC (614 aa).

Residues E99, 107 to 110, D119, and Y125 each bind FAD; that span reads TWHW. NADP(+) is bound by residues 255–261, 278–279, and 398–399; these read TGASGVQ, RT, and KR.

The protein belongs to the FAD-binding monooxygenase family. It depends on FAD as a cofactor.

It catalyses the reaction gamma-lactone-2-keto[5.5.5.5]fenestrane + NADPH + O2 + H(+) = penifulvin A + NADP(+) + H2O. It functions in the pathway secondary metabolite biosynthesis; terpenoid biosynthesis. Its function is as follows. Baeyer-Villiger monooxygenase; part of the gene cluster that mediates the biosynthesis of penifulvin A, a potent insecticidal sesquiterpene that features a [5.5.5.6]dioxafenestrane ring. Within the pathway, peniC is responsible for the final regioselective Baeyer-Villiger oxidation of gamma-lactone-2-keto[5.5.5.5]fenestran between C1 and C2 to form the delta-lactone moiety of penifulvin A. The first step of the pathway is performed by the sesquiterpene cyclase peniA that generates the angular triquinane scaffold silphinene via cyclization of the linear farnesyl pyrophosphate (FPP). The cytochrome P450 monooxygenase peniB and the flavin-dependent monooxygenase peniC then catalyze a series of oxidation reactions to transform silphinene into penifulvin A. The chain is Baeyer-Villiger monooxygenase peniC from Penicillium patulum (Penicillium griseofulvum).